A 354-amino-acid chain; its full sequence is Protein RecA (354 aa).

Gly-68 to Thr-75 provides a ligand contact to ATP.

This sequence belongs to the RecA family.

It is found in the cytoplasm. Its function is as follows. Can catalyze the hydrolysis of ATP in the presence of single-stranded DNA, the ATP-dependent uptake of single-stranded DNA by duplex DNA, and the ATP-dependent hybridization of homologous single-stranded DNAs. It interacts with LexA causing its activation and leading to its autocatalytic cleavage. This Synechocystis sp. (strain ATCC 27184 / PCC 6803 / Kazusa) protein is Protein RecA.